A 211-amino-acid chain; its full sequence is Mitotic spindle assembly checkpoint protein MAD2B (211 aa).

An HORMA domain is found at 13–203; that stretch reads QVVADVLSEF…SDILKMQLYV (191 aa).

In terms of assembly, homooligomer. Interacts with REV1. Interacts with FZR1 (in complex with the anaphase promoting complex APC). May interact with CDC20. Heterodimer with REV3L. This dimer forms the minimal DNA polymerase zeta complex (Pol-zeta2), with REV3L bearing DNA polymerase catalytic activity, although its activity is very low in this context. Component of the tetrameric Pol-zeta complex (Pol-zeta4), which consists of REV3L, MAD2L2, POLD2 and POLD3; Pol-zeta4 is the fully active form of DNA polymerase zeta. Component of the shieldin complex, consisting of SHLD1, SHLD2, SHLD3 and MAD2L2/REV7. Within the complex, SHLD2 forms a scaffold which interacts with a SHLD3-MAD2L2 subcomplex via its N-terminus, and with SHLD1 via its C-terminus.

The protein resides in the nucleus. It localises to the cytoplasm. The protein localises to the cytoskeleton. Its subcellular location is the spindle. It is found in the chromosome. Functionally, adapter protein able to interact with different proteins and involved in different biological processes. Mediates the interaction between the error-prone DNA polymerase zeta catalytic subunit REV3L and the inserter polymerase REV1, thereby mediating the second polymerase switching in translesion DNA synthesis. Translesion DNA synthesis releases the replication blockade of replicative polymerases, stalled in presence of DNA lesions. May also play a role in signal transduction in response to DNA damage. May regulate the activation of the anaphase promoting complex APC thereby regulating progression through the cell cycle. Component of the shieldin complex, which plays an important role in repair of DNA double-stranded breaks (DSBs). During G1 and S phase of the cell cycle, the complex functions downstream of TP53BP1 to promote non-homologous end joining (NHEJ) and suppress DNA end resection. Through transcriptional regulation may play a role in epithelial-mesenchymal transdifferentiation. The protein is Mitotic spindle assembly checkpoint protein MAD2B (MAD2L2) of Gallus gallus (Chicken).